The chain runs to 294 residues: ATP synthase gamma chain (294 aa).

It belongs to the ATPase gamma chain family. As to quaternary structure, F-type ATPases have 2 components, CF(1) - the catalytic core - and CF(0) - the membrane proton channel. CF(1) has five subunits: alpha(3), beta(3), gamma(1), delta(1), epsilon(1). CF(0) has three main subunits: a, b and c.

Its subcellular location is the cell inner membrane. Functionally, produces ATP from ADP in the presence of a proton gradient across the membrane. The gamma chain is believed to be important in regulating ATPase activity and the flow of protons through the CF(0) complex. This Nitrosomonas eutropha (strain DSM 101675 / C91 / Nm57) protein is ATP synthase gamma chain.